A 228-amino-acid polypeptide reads, in one-letter code: UPF0758 protein stu1465 (228 aa).

One can recognise an MPN domain in the interval 103-225; that stretch reads QIMSSQQVAR…YYSFREERED (123 aa). The Zn(2+) site is built by His-174, His-176, and Asp-187. The JAMM motif motif lies at 174-187; it reads HNHPSGEAYPSRND.

The protein belongs to the UPF0758 family.

This Streptococcus thermophilus (strain ATCC BAA-250 / LMG 18311) protein is UPF0758 protein stu1465.